The chain runs to 468 residues: UDP-N-acetylmuramate--L-alanine ligase (468 aa).

Gly114–Thr120 contributes to the ATP binding site.

Belongs to the MurCDEF family.

The protein localises to the cytoplasm. The enzyme catalyses UDP-N-acetyl-alpha-D-muramate + L-alanine + ATP = UDP-N-acetyl-alpha-D-muramoyl-L-alanine + ADP + phosphate + H(+). Its pathway is cell wall biogenesis; peptidoglycan biosynthesis. Functionally, cell wall formation. The sequence is that of UDP-N-acetylmuramate--L-alanine ligase from Rhodopseudomonas palustris (strain HaA2).